Reading from the N-terminus, the 587-residue chain is MERLMRLTILLFLGAVLAGCASVPSTSAPQAIGTVERPVPSNLPKPSPGMDPDVLLREFLKATADPANRHLAARQFLTESASNAWDDAGSALLIDHVVFVETRSAEKVSVTMRADILGSLSDVGVFETAEGQLPDPGPIELVKTSDGWRIDRLPNGVFLDWQQFQETYKRNTLYFADPTGKTVVPDPRYVAVSDRDQLATELVSKLLAGPRPEMARTVRNLLAPPLRLRGPVTRADGGKSGIGRGYGGARVDMEKLSTTDPHSRQLLAAQIIWTLARADIRGPYVINADGAPLEDRFAEGWTTSDVAATDPGVADGAAAGLHALVNGSLVAMDAQRVTPVPGAFGRMPEQTAAAVSRSGRQVASVVTLGRGAPDEAASLWVGDLGGEAVQSADGHSLSRPSWSLDDAVWVVVDTNVVLRAIQDPASGQPARIPVDSTAVASRFPGAINDLQLSRDGTRAAMVIGGQVILAGVEQTQAGQFALTYPRRLGFGLGSSVVSLSWRTGDDIVVTRTDAAHPVSYVNLDGVNSDAPSRGLQTPLTAIAANPSTVYVAGPQGVLMYSASVESRPGWADVPGLMVPGAAPVLPG.

The signal sequence occupies residues Met1–Gly19. Cys20 is lipidated: N-palmitoyl cysteine. Residue Cys20 is the site of S-diacylglycerol cysteine attachment.

This sequence belongs to the LpqB lipoprotein family. Interacts with MtrB, probably extracytoplasmically.

It is found in the cell membrane. The protein resides in the secreted. The protein localises to the cell wall. Its function is as follows. May modulate activity of the MtrAB system in controlling homeostasis of the cell wall and cell division. In Mycobacterium tuberculosis (strain CDC 1551 / Oshkosh), this protein is Lipoprotein LpqB.